Here is a 223-residue protein sequence, read N- to C-terminus: Ribosomal RNA small subunit methyltransferase G (223 aa).

Gly85, Phe90, and Arg154 together coordinate S-adenosyl-L-methionine.

The protein belongs to the methyltransferase superfamily. RNA methyltransferase RsmG family.

It is found in the cytoplasm. The catalysed reaction is guanosine(527) in 16S rRNA + S-adenosyl-L-methionine = N(7)-methylguanosine(527) in 16S rRNA + S-adenosyl-L-homocysteine. Functionally, specifically methylates the N7 position of guanine in position 527 of 16S rRNA. This Rhodopseudomonas palustris (strain TIE-1) protein is Ribosomal RNA small subunit methyltransferase G.